A 303-amino-acid polypeptide reads, in one-letter code: Probable 5-dehydro-4-deoxyglucarate dehydratase (303 aa).

This sequence belongs to the DapA family.

It catalyses the reaction 5-dehydro-4-deoxy-D-glucarate + H(+) = 2,5-dioxopentanoate + CO2 + H2O. It functions in the pathway carbohydrate acid metabolism; D-glucarate degradation; 2,5-dioxopentanoate from D-glucarate: step 2/2. In Paracidovorax citrulli (strain AAC00-1) (Acidovorax citrulli), this protein is Probable 5-dehydro-4-deoxyglucarate dehydratase.